A 235-amino-acid polypeptide reads, in one-letter code: NAD(P)H-hydrate epimerase (235 aa).

One can recognise a YjeF N-terminal domain in the interval 12–218 (AIVMDQLLMG…EFLKETNLTI (207 aa)). (6S)-NADPHX is bound at residue 62–66 (NNGGD). K(+) is bound by residues Asn63 and Asp127. (6S)-NADPHX is bound by residues 131–137 (GYSFKGD) and Asp161. Ser164 serves as a coordination point for K(+).

Belongs to the NnrE/AIBP family. K(+) is required as a cofactor.

It catalyses the reaction (6R)-NADHX = (6S)-NADHX. The enzyme catalyses (6R)-NADPHX = (6S)-NADPHX. Catalyzes the epimerization of the S- and R-forms of NAD(P)HX, a damaged form of NAD(P)H that is a result of enzymatic or heat-dependent hydration. This is a prerequisite for the S-specific NAD(P)H-hydrate dehydratase to allow the repair of both epimers of NAD(P)HX. The chain is NAD(P)H-hydrate epimerase from Dictyostelium discoideum (Social amoeba).